A 161-amino-acid polypeptide reads, in one-letter code: Pupal cuticle protein C1B (161 aa).

9 repeat units span residues 6–9 (AAPA), 14–17 (AAPA), 35–38 (AAPA), 87–90 (AAPV), 103–106 (AAPV), 112–115 (AAPV), 121–124 (AAPV), 130–133 (AAPV), and 143–146 (AAPA).

In terms of biological role, component of the cuticle of the pupa of Tenebrio molitor. This is Pupal cuticle protein C1B from Tenebrio molitor (Yellow mealworm beetle).